The chain runs to 230 residues: Magnesium-protoporphyrin O-methyltransferase (230 aa).

Belongs to the class I-like SAM-binding methyltransferase superfamily. Magnesium protoporphyrin O-methyltransferase family.

The catalysed reaction is Mg-protoporphyrin IX + S-adenosyl-L-methionine = Mg-protoporphyrin IX 13-monomethyl ester + S-adenosyl-L-homocysteine. The protein operates within porphyrin-containing compound metabolism; chlorophyll biosynthesis (light-independent). In terms of biological role, converts Mg-protoporphyrin IX to Mg-protoporphyrin IX methylester using S-adenosyl-L-methionine as a cofactor. The sequence is that of Magnesium-protoporphyrin O-methyltransferase (chlM) from Synechocystis sp. (strain ATCC 27184 / PCC 6803 / Kazusa).